A 141-amino-acid polypeptide reads, in one-letter code: Lutropin subunit beta (141 aa).

Positions 1-20 (MEMLQGLLLWLLLNVGGVWA) are cleaved as a signal peptide. Intrachain disulfides connect cysteine 29/cysteine 77, cysteine 43/cysteine 92, cysteine 46/cysteine 130, cysteine 54/cysteine 108, cysteine 58/cysteine 110, and cysteine 113/cysteine 120. N-linked (GlcNAc...) asparagine glycosylation occurs at asparagine 33.

It belongs to the glycoprotein hormones subunit beta family. Heterodimer of a common alpha chain and a unique beta chain which confers biological specificity to thyrotropin, lutropin, follitropin and gonadotropin.

It is found in the secreted. Functionally, promotes spermatogenesis and ovulation by stimulating the testes and ovaries to synthesize steroids. This is Lutropin subunit beta (LHB) from Ailurus fulgens (Himalayan red panda).